The chain runs to 141 residues: Anthrone oxygenase ptaC (141 aa).

Positions 1-19 are cleaved as a signal peptide; it reads MMGLPLMAVPMLLDTGADP. The next 2 membrane-spanning stretches (helical) occupy residues 33 to 53 and 64 to 84; these read GVRT…WTII and ILAV…YVLA.

It belongs to the anthrone oxygenase family.

The protein localises to the membrane. It participates in secondary metabolite biosynthesis. In terms of biological role, anthrone oxygenase; part of the gene cluster that mediates the biosynthesis of pestheic acid, a diphenyl ether which is a biosynthetic precursor of the unique chloropupukeananes. The biosynthesis initiates from condensation of acetate and malonate units catalyzed by the non-reducing PKS ptaA. As the ptaA protein is TE/CLC domain-deficient, hydrolysis and Claisen cyclization of the polyketide could be catalyzed by ptaB containing a beta-lactamase domain. The ptaB protein might hydrolyze the thioester bond between the ACP of ptaA and the intermediate to release atrochrysone carboxylic acid, which is spontaneously dehydrated to form endocrocin anthrone. Endocrocin anthrone is then converted to endocrocin, catalyzed by the anthrone oxygenase ptaC. Spontaneous decarboxylation of endocrocin occurs to generate emodin. An O-methyltransferase (ptaH or ptaI) could methylate emodin to form physcion. PtaJ could then catalyze the oxidative cleavage of physcion, and rotation of the intermediate could then afford desmethylisosulochrin. PtaF, a putative NADH-dependent oxidoreductase, might also participate in the oxidative cleavage step. Desmethylisosulochrin is then transformed by another O-methyltransferase (ptaH or ptaI) to form isosulochrin. Chlorination of isosulochrin by ptaM in the cyclohexadienone B ring then produces chloroisosulochrin. PtaE is responsible for the oxidative coupling reactions of both benzophenones isosulochrin and chloroisosulochrin to RES-1214-1 and pestheic acid respectively, regardless of chlorination. The protein is Anthrone oxygenase ptaC of Pestalotiopsis fici (strain W106-1 / CGMCC3.15140).